The sequence spans 185 residues: Large ribosomal subunit protein uL5m (185 aa).

Belongs to the universal ribosomal protein uL5 family.

Its subcellular location is the mitochondrion. The polypeptide is Large ribosomal subunit protein uL5m (RPL5) (Brassica napus (Rape)).